We begin with the raw amino-acid sequence, 121 residues long: Large ribosomal subunit protein uL22 (121 aa).

This sequence belongs to the universal ribosomal protein uL22 family. In terms of assembly, part of the 50S ribosomal subunit.

Its function is as follows. This protein binds specifically to 23S rRNA; its binding is stimulated by other ribosomal proteins, e.g. L4, L17, and L20. It is important during the early stages of 50S assembly. It makes multiple contacts with different domains of the 23S rRNA in the assembled 50S subunit and ribosome. The globular domain of the protein is located near the polypeptide exit tunnel on the outside of the subunit, while an extended beta-hairpin is found that lines the wall of the exit tunnel in the center of the 70S ribosome. This is Large ribosomal subunit protein uL22 from Salinibacter ruber (strain DSM 13855 / M31).